Reading from the N-terminus, the 59-residue chain is MKKMKVTQFKSGAHRLKSHKACLKGLGLRRINHSVVVEDTPSTRGMVNRVNYLVKVEEA.

Belongs to the universal ribosomal protein uL30 family. Part of the 50S ribosomal subunit.

The polypeptide is Large ribosomal subunit protein uL30 (Psychrobacter cryohalolentis (strain ATCC BAA-1226 / DSM 17306 / VKM B-2378 / K5)).